A 102-amino-acid chain; its full sequence is Protamine-2 (102 aa).

Residues Ser8, Ser10, and Ser37 each carry the phosphoserine modification. Disordered regions lie at residues 15–41 (EVYG…PEQV) and 66–102 (IHRQ…CRRH).

This sequence belongs to the protamine P2 family. In terms of assembly, interacts with TDRP. Post-translationally, proteolytic processing into mature chains is required for histone eviction during spermatogenesis. Transition proteins (TNP1 and TNP2) are required for processing. As to expression, testis.

The protein resides in the nucleus. The protein localises to the chromosome. Functionally, protamines substitute for histones in the chromatin of sperm during the haploid phase of spermatogenesis. They compact sperm DNA into a highly condensed, stable and inactive complex. The polypeptide is Protamine-2 (PRM2) (Pongo pygmaeus (Bornean orangutan)).